A 511-amino-acid chain; its full sequence is 2,3-bisphosphoglycerate-independent phosphoglycerate mutase (511 aa).

Residues Asp12 and Ser62 each coordinate Mn(2+). The Phosphoserine intermediate role is filled by Ser62. Substrate-binding positions include His123, 153–154, Arg185, Arg191, 260–263, and Lys335; these read RD and RPDR. Asp402, His406, Asp443, His444, and His462 together coordinate Mn(2+).

It belongs to the BPG-independent phosphoglycerate mutase family. Monomer. The cofactor is Mn(2+).

The enzyme catalyses (2R)-2-phosphoglycerate = (2R)-3-phosphoglycerate. It participates in carbohydrate degradation; glycolysis; pyruvate from D-glyceraldehyde 3-phosphate: step 3/5. Its function is as follows. Catalyzes the interconversion of 2-phosphoglycerate and 3-phosphoglycerate. This is 2,3-bisphosphoglycerate-independent phosphoglycerate mutase from Acetivibrio thermocellus (strain ATCC 27405 / DSM 1237 / JCM 9322 / NBRC 103400 / NCIMB 10682 / NRRL B-4536 / VPI 7372) (Clostridium thermocellum).